A 261-amino-acid chain; its full sequence is Ribosomal RNA small subunit methyltransferase A (261 aa).

H12, L14, G39, E60, D81, and N104 together coordinate S-adenosyl-L-methionine.

It belongs to the class I-like SAM-binding methyltransferase superfamily. rRNA adenine N(6)-methyltransferase family. RsmA subfamily.

Its subcellular location is the cytoplasm. It catalyses the reaction adenosine(1518)/adenosine(1519) in 16S rRNA + 4 S-adenosyl-L-methionine = N(6)-dimethyladenosine(1518)/N(6)-dimethyladenosine(1519) in 16S rRNA + 4 S-adenosyl-L-homocysteine + 4 H(+). In terms of biological role, specifically dimethylates two adjacent adenosines (A1518 and A1519) in the loop of a conserved hairpin near the 3'-end of 16S rRNA in the 30S particle. May play a critical role in biogenesis of 30S subunits. This is Ribosomal RNA small subunit methyltransferase A from Albidiferax ferrireducens (strain ATCC BAA-621 / DSM 15236 / T118) (Rhodoferax ferrireducens).